A 231-amino-acid polypeptide reads, in one-letter code: L-ribulose-5-phosphate 4-epimerase (231 aa).

Substrate is bound by residues 27–28 (GN), 44–45 (SG), and 74–75 (SS). Positions 76, 95, and 97 each coordinate Zn(2+). The active-site Proton donor/acceptor is Asp-120. Residue His-171 coordinates Zn(2+). Tyr-229 serves as the catalytic Proton donor/acceptor.

It belongs to the aldolase class II family. AraD/FucA subfamily. Homotetramer. The cofactor is Zn(2+).

It catalyses the reaction L-ribulose 5-phosphate = D-xylulose 5-phosphate. It participates in carbohydrate degradation; L-arabinose degradation via L-ribulose; D-xylulose 5-phosphate from L-arabinose (bacterial route): step 3/3. Its function is as follows. Involved in the degradation of L-arabinose. Catalyzes the interconversion of L-ribulose 5-phosphate (LRu5P) and D-xylulose 5-phosphate (D-Xu5P) via a retroaldol/aldol mechanism (carbon-carbon bond cleavage analogous to a class II aldolase reaction). The sequence is that of L-ribulose-5-phosphate 4-epimerase from Salmonella typhimurium (strain LT2 / SGSC1412 / ATCC 700720).